The primary structure comprises 478 residues: Metalloendopeptidase OMA1, mitochondrial (478 aa).

Positions 134 to 164 (LGRSIRKWWVALPANKKQLFREWSWRRRWHF) are stress-sensor region. A helical transmembrane segment spans residues 163 to 183 (HFLGAGTGLLFIASLFFFTHL). Histidine 296 lines the Zn(2+) pocket. The active site involves glutamate 297. The Zn(2+) site is built by histidine 300 and glutamate 361. Residues cysteine 376 and cysteine 434 are joined by a disulfide bond.

It belongs to the peptidase M48 family. In terms of assembly, homooligomer. It depends on Zn(2+) as a cofactor. In terms of processing, autocatalytically cleaved in response to mitochondrial depolarization both at the N-terminus and C-terminus to generate the short active form (S-OMA1). The S-OMA1 form is unstable. Post-translationally, may form a redox-dependent disulfide bond. Exists in a semi-oxidized state and is activated by prolonged hypoxia.

It is found in the mitochondrion inner membrane. With respect to regulation, protease activity is activated upon autocatalytic cleavage in response to mitochondrial depolarization. Metalloprotease that is part of the quality control system in the inner membrane of mitochondria. Activated in response to various mitochondrial stress, leading to the proteolytic cleavage of target proteins, such as opa1 and dele1. Involved in the fusion of the mitochondrial inner membranes by mediating cleavage of opa1 at S1 position, generating the soluble opa1 (S-opa1), which cooperates with the membrane form (L-opa1) to coordinate the fusion of mitochondrial inner membranes. Following stress conditions that induce loss of mitochondrial membrane potential, mediates cleavage of opa1, leading to excess production of soluble opa1 (S-opa1) and negative regulation of mitochondrial fusion. Also acts as an activator of the integrated stress response (ISR): in response to mitochondrial stress, mediates cleavage of dele1 to generate the processed form of dele1 (S-DELE1), which translocates to the cytosol and activates eif2ak1/hri to trigger the ISR. Required for the stability of the respiratory supercomplexes. This is Metalloendopeptidase OMA1, mitochondrial from Danio rerio (Zebrafish).